A 140-amino-acid chain; its full sequence is ECDVLERFKVKHQWQTVFSEAHRTEFSLHFWKEFLHDHPSLVELFTRVNGANIYSPEFQAHGIRVLAGLDSVIGVLDEIPTLTVQLAHLKAQHTERGTKPEYFDLFGKHLASHLGDELGTHFDYAAFRDCYDFIASGIKP.

The Globin domain maps to 1–140 (ECDVLERFKV…YDFIASGIKP (140 aa)). A disulfide bridge links Cys2 with Cys130. His93 is a heme b binding site.

Belongs to the globin family. As to quaternary structure, the giant hemoglobins of worms are formed of a monomeric subunit and a disulfide-bonded trimer. This subunit is monomeric.

It localises to the secreted. This is Extracellular globin-1 from Metaphire hilgendorfi (Earthworm).